Here is a 347-residue protein sequence, read N- to C-terminus: GMP reductase (347 aa).

An NADP(+)-binding site is contributed by 108–131 (DDFTKTRQILAMSTALRFICVDVA). K(+) contacts are provided by G181 and G183. The Thioimidate intermediate role is filled by C186. Position 216-239 (216-239 (IVGDGGCTCPGDVAKAFGGGADFV)) interacts with NADP(+).

The protein belongs to the IMPDH/GMPR family. GuaC type 1 subfamily. In terms of assembly, homotetramer.

The enzyme catalyses IMP + NH4(+) + NADP(+) = GMP + NADPH + 2 H(+). In terms of biological role, catalyzes the irreversible NADPH-dependent deamination of GMP to IMP. It functions in the conversion of nucleobase, nucleoside and nucleotide derivatives of G to A nucleotides, and in maintaining the intracellular balance of A and G nucleotides. In Aeromonas salmonicida (strain A449), this protein is GMP reductase.